The chain runs to 138 residues: uncharacterized protein (138 aa).

Disordered regions lie at residues 1-23 and 35-83; these read MPES…MLSE and ASPS…EDPV. Residues 60 to 69 show a composition bias toward acidic residues; it reads DEETIPEEDD.

This is an uncharacterized protein from Schizosaccharomyces pombe (strain 972 / ATCC 24843) (Fission yeast).